The chain runs to 136 residues: Large ribosomal subunit protein eL27 (136 aa).

Residues 5 to 36 (MKPGKVVLVLRGKYAGRKAVVVKQQDEGVSDR) form the KOW domain.

It belongs to the eukaryotic ribosomal protein eL27 family. As to quaternary structure, component of the large ribosomal subunit.

Its subcellular location is the cytoplasm. The protein resides in the cytosol. It is found in the rough endoplasmic reticulum. Component of the large ribosomal subunit. This Caenorhabditis elegans protein is Large ribosomal subunit protein eL27 (rpl-27).